Reading from the N-terminus, the 237-residue chain is MNEEMSGESPENNKHVKKPTMPEKIDYVFKVVVIGDSAVGKTQLLSRFTHNEFCYDSKSTIGVEFQTRTITLRGKLVKAQIWDTAGQERYRAVTSAYYRGALGAMVVYDITKRLSFDHVARWVEELRAHADDSAVIMLVGNKADLSVGKRAVPTEDAVEFAETQRLFFSEVSALSGGNVDEAFFRLLEEIFSRVVVSRKAMESDGGATVKLDGSRIDVISGSDLETSNIKEQASCSC.

Residue 35 to 42 (GDSAVGKT) coordinates GTP. The Effector region signature appears at 57–65 (SKSTIGVEF). GTP is bound by residues 83 to 87 (DTAGQ), 141 to 144 (NKAD), and 172 to 173 (SA). Residues Cys235 and Cys237 are each lipidated (S-geranylgeranyl cysteine). Cys237 is subject to Cysteine methyl ester.

The protein belongs to the small GTPase superfamily. Rab family. As to expression, expressed in root tips.

The protein resides in the endosome membrane. Its subcellular location is the golgi apparatus. The protein localises to the trans-Golgi network membrane. Functionally, intracellular vesicle trafficking and protein transport. In Arabidopsis thaliana (Mouse-ear cress), this protein is Ras-related protein RABA3 (RABA3).